Here is a 74-residue protein sequence, read N- to C-terminus: UPF0352 protein MS1910 (74 aa).

It belongs to the UPF0352 family.

The protein is UPF0352 protein MS1910 of Mannheimia succiniciproducens (strain KCTC 0769BP / MBEL55E).